The primary structure comprises 619 residues: DNA mismatch repair protein MutL (619 aa).

A disordered region spans residues 358 to 401 (GGNQFARPSEAREAATRFSITSSREPAASGGSSGGASWPHAQPG).

This sequence belongs to the DNA mismatch repair MutL/HexB family.

Its function is as follows. This protein is involved in the repair of mismatches in DNA. It is required for dam-dependent methyl-directed DNA mismatch repair. May act as a 'molecular matchmaker', a protein that promotes the formation of a stable complex between two or more DNA-binding proteins in an ATP-dependent manner without itself being part of a final effector complex. The polypeptide is DNA mismatch repair protein MutL (Klebsiella pneumoniae (strain 342)).